Here is a 188-residue protein sequence, read N- to C-terminus: Large ribosomal subunit protein eL18 (188 aa).

The interval 151–188 (HFGPAPGVPHSHTKPLVRSKGRKFERARGRRKSCGYKK) is disordered. 2 stretches are compositionally biased toward basic residues: residues 161 to 171 (SHTKPLVRSKG) and 178 to 188 (RGRRKSCGYKK).

This sequence belongs to the eukaryotic ribosomal protein eL18 family.

It is found in the cytoplasm. This chain is Large ribosomal subunit protein eL18 (RpL18), found in Lysiphlebus testaceipes (Greenbugs aphid parastoid).